A 737-amino-acid polypeptide reads, in one-letter code: Autophagy-related protein 22 (737 aa).

The segment at 115-154 is disordered; sequence RMSPANAGDNSDSYPYGDDTDGDSSSGLPPPRYPGDDTRP. Residues 125–141 show a composition bias toward low complexity; the sequence is SDSYPYGDDTDGDSSSG. Helical transmembrane passes span 166–186, 232–252, 264–284, and 289–309; these read YAFA…PILL, SFAM…VVSI, KLLL…IFIS, and LIGA…FVLL. Positions 327–353 are disordered; the sequence is GDYGSPGYATTEEGDDEDDEYQEDSTR. A compositionally biased stretch (acidic residues) spans 338–349; it reads EEGDDEDDEYQE. Asn-354 carries an N-linked (GlcNAc...) asparagine glycan. A helical membrane pass occupies residues 395 to 415; it reads GIGIGYIAGLFLQCVAIAILI. The N-linked (GlcNAc...) asparagine glycan is linked to Asn-419. 7 consecutive transmembrane segments (helical) span residues 426–446, 487–507, 524–544, 559–579, 593–613, 632–652, and 661–681; these read IVLC…AMWL, LVDI…IATT, WALG…AFSW, ILAC…GYLP, WEMY…SGYC, LYAI…GAII, and AFWF…FINV.

This sequence belongs to the ATG22 family.

Its subcellular location is the vacuole membrane. In terms of biological role, vacuolar effluxer which mediate the efflux of amino acids resulting from autophagic degradation. The release of autophagic amino acids allows the maintenance of protein synthesis and viability during nitrogen starvation. The protein is Autophagy-related protein 22 (apg-11) of Neurospora crassa (strain ATCC 24698 / 74-OR23-1A / CBS 708.71 / DSM 1257 / FGSC 987).